The chain runs to 543 residues: Excitatory amino acid transporter 1 (543 aa).

Residues 1-47 (MTKSNGEDPRAGSRMERFQQGVRQRTLLAKKKVQNITKDDVKGFLKR) are Cytoplasmic-facing. The helical transmembrane segment at 48-68 (NGFVLFTVIAVVVGSILGFSV) threads the bilayer. Topologically, residues 69–86 (RSYHMTFRELKYFSFPGE) are extracellular. A helical membrane pass occupies residues 87–108 (LLMRMLQMLVLPLIVSSLVTGM). At 109–122 (AALDSKASGKMGLR) the chain is on the cytoplasmic side. A helical membrane pass occupies residues 123 to 145 (AVVYYMTTTVIAVFIGIVIVIIV). The Extracellular portion of the chain corresponds to 146-237 (HPGKGTKEHM…MREEMIPVPG (92 aa)). Residues asparagine 206 and asparagine 217 are each glycosylated (N-linked (GlcNAc...) asparagine). The helical transmembrane segment at 238-261 (AVNGVNALGLVVFSMCFGLVIGNM) threads the bilayer. Topologically, residues 262 to 270 (KEQGKALKD) are cytoplasmic. Residues 271–298 (FFDSLNEAIMRLVAVIMWYAPIGILFLI) traverse the membrane as a helical segment. At 299–319 (AGKIAEMEDMGVVGGQLGMYT) the chain is on the extracellular side. A helical transmembrane segment spans residues 320–341 (VTVIIGLLIHAVIVLPLLYFAV). The Cytoplasmic segment spans residues 342-346 (TRKNP). An intramembrane region (discontinuously helical) is located at residues 347–377 (WVFIGGILQALITALGTSSSSATLPITFKCL). Residue 364-366 (SSS) coordinates L-aspartate. Topologically, residues 378 to 386 (EENNKVDKR) are cytoplasmic. The helical transmembrane segment at 387–413 (VTRFVLPVGATINMDGTALYEALAAIF) threads the bilayer. 3 residues coordinate Na(+): glycine 395, threonine 397, and asparagine 399. L-aspartate is bound at residue threonine 403. The Extracellular segment spans residues 414–426 (IAQVNNYDLNFGQ). An intramembrane region (discontinuously helical) is located at residues 427–460 (ILTISITATAASIGAAGIPQAGLVTMVIVLTSVG). 444-448 (IPQAG) is an L-aspartate binding site. The Extracellular segment spans residues 461 to 473 (LPTDDITLIIAVD). The helical transmembrane segment at 474–495 (WFLDRLRTTTNVLGDSLGAGIV) threads the bilayer. L-aspartate-binding residues include aspartate 477 and asparagine 484. Asparagine 484 and aspartate 488 together coordinate Na(+). Topologically, residues 496 to 543 (EHLSRHELQSGDAEMGNSVIEENEMKKPYQLVSQENELEKPIDSETKM) are cytoplasmic. A disordered region spans residues 521 to 543 (KKPYQLVSQENELEKPIDSETKM). A compositionally biased stretch (basic and acidic residues) spans 532-543 (ELEKPIDSETKM).

It belongs to the dicarboxylate/amino acid:cation symporter (DAACS) (TC 2.A.23) family. As to quaternary structure, homotrimer. Detected in retina (at protein level).

Its subcellular location is the cell membrane. The catalysed reaction is K(+)(in) + L-glutamate(out) + 3 Na(+)(out) + H(+)(out) = K(+)(out) + L-glutamate(in) + 3 Na(+)(in) + H(+)(in). It carries out the reaction K(+)(in) + L-aspartate(out) + 3 Na(+)(out) + H(+)(out) = K(+)(out) + L-aspartate(in) + 3 Na(+)(in) + H(+)(in). The enzyme catalyses D-aspartate(out) + K(+)(in) + 3 Na(+)(out) + H(+)(out) = D-aspartate(in) + K(+)(out) + 3 Na(+)(in) + H(+)(in). In terms of biological role, sodium-dependent, high-affinity amino acid transporter that mediates the uptake of L-glutamate and also L-aspartate and D-aspartate. Functions as a symporter that transports one amino acid molecule together with two or three Na(+) ions and one proton, in parallel with the counter-transport of one K(+) ion. Plays a redundant role in the rapid removal of released glutamate from the synaptic cleft, which is essential for terminating the postsynaptic action of glutamate. This Ambystoma tigrinum (Eastern tiger salamander) protein is Excitatory amino acid transporter 1 (SLC1A3).